The chain runs to 308 residues: Tetraacyldisaccharide 4'-kinase (308 aa).

63 to 70 (SFGGNGKT) lines the ATP pocket.

The protein belongs to the LpxK family.

It carries out the reaction a lipid A disaccharide + ATP = a lipid IVA + ADP + H(+). It participates in glycolipid biosynthesis; lipid IV(A) biosynthesis; lipid IV(A) from (3R)-3-hydroxytetradecanoyl-[acyl-carrier-protein] and UDP-N-acetyl-alpha-D-glucosamine: step 6/6. Its function is as follows. Transfers the gamma-phosphate of ATP to the 4'-position of a tetraacyldisaccharide 1-phosphate intermediate (termed DS-1-P) to form tetraacyldisaccharide 1,4'-bis-phosphate (lipid IVA). This chain is Tetraacyldisaccharide 4'-kinase, found in Campylobacter jejuni subsp. jejuni serotype O:6 (strain 81116 / NCTC 11828).